The sequence spans 212 residues: External core antigen (212 aa).

The first 19 residues, 1–19, serve as a signal peptide directing secretion; the sequence is MQLFHLCLIISCSCPTVQA. An HBEAG region spans residues 25–27; it reads GWL. The disordered stretch occupies residues 179-212; sequence RQRGRTIRRRTPSPRRRRSQSPRRRRSQSRESQC. Residues 180–205 show a composition bias toward basic residues; the sequence is QRGRTIRRRTPSPRRRRSQSPRRRRS. The stretch at 184–190 is one 1; half-length repeat; that stretch reads TIRRRTP. The 3 X 8 AA repeats of S-P-R-R-R-R-S-Q stretch occupies residues 184 to 206; the sequence is TIRRRTPSPRRRRSQSPRRRRSQ. A propeptide spanning residues 184–212 is cleaved from the precursor; it reads TIRRRTPSPRRRRSQSPRRRRSQSRESQC. Repeat copies occupy residues 191-198 and 199-206.

The protein belongs to the orthohepadnavirus precore antigen family. In terms of assembly, homodimerizes. Phosphorylated. Post-translationally, cleaved by host furin.

It is found in the secreted. The protein resides in the host nucleus. Its function is as follows. May regulate immune response to the intracellular capsid in acting as a T-cell tolerogen, by having an immunoregulatory effect which prevents destruction of infected cells by cytotoxic T-cells. This immune regulation may predispose to chronicity during perinatal infections and prevent severe liver injury during adult infections. In Hepatitis B virus genotype D subtype ayw (isolate Australia/AustKW/1991) (HBV-D), this protein is External core antigen.